The following is an 81-amino-acid chain: uncharacterized protein (81 aa).

The SpoVT-AbrB domain maps to 1–45 (MRTTIDVAGRLVIPKRIRERLGLRGNDQVEITERDGRIEIEPAPT).

The protein to B.subtilis SpoVT.

This is an uncharacterized protein from Mycobacterium bovis (strain ATCC BAA-935 / AF2122/97).